The following is a 260-amino-acid chain: Small ribosomal subunit protein eS1 (260 aa).

K30 is modified (N6-acetyllysine; alternate). Residue K30 forms a Glycyl lysine isopeptide (Lys-Gly) (interchain with G-Cter in SUMO2); alternate linkage. An N6-acetyllysine modification is found at K52. Y151 is modified (ADP-ribosyltyrosine). Residues 228–260 (HGEGSSSGKATGDETGAKVERADGYEPPVQESV) form a disordered region. Residues S232 and S233 each carry the phosphoserine modification. Residues 238-251 (TGDETGAKVERADG) are compositionally biased toward basic and acidic residues. K245 carries the N6-acetyllysine; alternate modification. A Glycyl lysine isopeptide (Lys-Gly) (interchain with G-Cter in SUMO2); alternate cross-link involves residue K245. At Y252 the chain carries Phosphotyrosine. S259 bears the Phosphoserine mark.

Belongs to the eukaryotic ribosomal protein eS1 family. In terms of assembly, component of the small ribosomal subunit. Mature ribosomes consist of a small (40S) and a large (60S) subunit. The 40S subunit contains about 33 different proteins and 1 molecule of RNA (18S). The 60S subunit contains about 49 different proteins and 3 molecules of RNA (28S, 5.8S and 5S). Identified in a IGF2BP1-dependent mRNP granule complex containing untranslated mRNAs. Binds with high affinity to IPO4. Interacts with DDIT3. Part of the small subunit (SSU) processome, composed of more than 70 proteins and the RNA chaperone small nucleolar RNA (snoRNA) U3. In terms of processing, ADP-ribosylated at Tyr-151 by PARP1 in presence of HPF1.

Its subcellular location is the cytoplasm. It is found in the nucleus. The protein localises to the nucleolus. In terms of biological role, component of the small ribosomal subunit. The ribosome is a large ribonucleoprotein complex responsible for the synthesis of proteins in the cell. Part of the small subunit (SSU) processome, first precursor of the small eukaryotic ribosomal subunit. During the assembly of the SSU processome in the nucleolus, many ribosome biogenesis factors, an RNA chaperone and ribosomal proteins associate with the nascent pre-rRNA and work in concert to generate RNA folding, modifications, rearrangements and cleavage as well as targeted degradation of pre-ribosomal RNA by the RNA exosome. May play a role during erythropoiesis through regulation of transcription factor DDIT3. The sequence is that of Small ribosomal subunit protein eS1 from Felis catus (Cat).